The primary structure comprises 465 residues: Glutamate--tRNA ligase 1 (465 aa).

The 'HIGH' region signature appears at 8-18 (PSPTGLMHLGN). A 'KMSKS' region motif is present at residues 249–253 (PLSKR). Lys252 contacts ATP.

Belongs to the class-I aminoacyl-tRNA synthetase family. Glutamate--tRNA ligase type 1 subfamily. Monomer.

The protein localises to the cytoplasm. The catalysed reaction is tRNA(Glu) + L-glutamate + ATP = L-glutamyl-tRNA(Glu) + AMP + diphosphate. Functionally, catalyzes the attachment of glutamate to tRNA(Glu) in a two-step reaction: glutamate is first activated by ATP to form Glu-AMP and then transferred to the acceptor end of tRNA(Glu). The sequence is that of Glutamate--tRNA ligase 1 from Coxiella burnetii (strain CbuG_Q212) (Coxiella burnetii (strain Q212)).